We begin with the raw amino-acid sequence, 101 residues long: uncharacterized protein (101 aa).

The chain crosses the membrane as a helical span at residues 13–33; the sequence is FISIMCLFSIPLCFSLSIFFF.

It is found in the membrane. This is an uncharacterized protein from Schizosaccharomyces pombe (strain 972 / ATCC 24843) (Fission yeast).